The following is a 298-amino-acid chain: Pyridoxal kinase PdxY (298 aa).

Ser-17 provides a ligand contact to substrate. 2 residues coordinate ATP: Asp-119 and Glu-156. Asp-234 serves as a coordination point for substrate.

This sequence belongs to the pyridoxine kinase family. PdxY subfamily. Homodimer. It depends on Mg(2+) as a cofactor.

The catalysed reaction is pyridoxal + ATP = pyridoxal 5'-phosphate + ADP + H(+). It participates in cofactor metabolism; pyridoxal 5'-phosphate salvage; pyridoxal 5'-phosphate from pyridoxal: step 1/1. In terms of biological role, pyridoxal kinase involved in the salvage pathway of pyridoxal 5'-phosphate (PLP). Catalyzes the phosphorylation of pyridoxal to PLP. This chain is Pyridoxal kinase PdxY, found in Deinococcus radiodurans (strain ATCC 13939 / DSM 20539 / JCM 16871 / CCUG 27074 / LMG 4051 / NBRC 15346 / NCIMB 9279 / VKM B-1422 / R1).